We begin with the raw amino-acid sequence, 529 residues long: HTH-type transcriptional activator Btr (529 aa).

The segment at residues 182–201 (LAQLSQMAGISAKHYSESFK) is a DNA-binding region (H-T-H motif). The region spanning 268-528 (KIAAYGRGTM…QTVSLLSGDC (261 aa)) is the Fe/B12 periplasmic-binding domain.

Binds with high affinity to both apo-bacillibactin and iron-bacillibactin.

It localises to the cytoplasm. In iron-limited conditions, activates expression of the feuABCybbA operon, which encodes the bacillibactin uptake system. Acts by binding directly to a conserved direct repeat element upstream of the feuA promoter. Activity is increased in the presence of bacillibactin. The chain is HTH-type transcriptional activator Btr (btr) from Bacillus subtilis (strain 168).